The chain runs to 308 residues: Porphobilinogen deaminase (308 aa).

S-(dipyrrolylmethanemethyl)cysteine is present on Cys243.

The protein belongs to the HMBS family. As to quaternary structure, monomer. Dipyrromethane serves as cofactor.

It carries out the reaction 4 porphobilinogen + H2O = hydroxymethylbilane + 4 NH4(+). It functions in the pathway porphyrin-containing compound metabolism; protoporphyrin-IX biosynthesis; coproporphyrinogen-III from 5-aminolevulinate: step 2/4. Functionally, tetrapolymerization of the monopyrrole PBG into the hydroxymethylbilane pre-uroporphyrinogen in several discrete steps. In Mesorhizobium japonicum (strain LMG 29417 / CECT 9101 / MAFF 303099) (Mesorhizobium loti (strain MAFF 303099)), this protein is Porphobilinogen deaminase.